The primary structure comprises 348 residues: Adenosine deaminase (348 aa).

The Zn(2+) site is built by histidine 16 and histidine 18. Residues histidine 18, aspartate 20, and glycine 174 each contribute to the substrate site. Residue histidine 201 participates in Zn(2+) binding. Glutamate 204 (proton donor) is an active-site residue. Aspartate 282 lines the Zn(2+) pocket.

The protein belongs to the metallo-dependent hydrolases superfamily. Adenosine and AMP deaminases family. Adenosine deaminase subfamily. The cofactor is Zn(2+).

The catalysed reaction is adenosine + H2O + H(+) = inosine + NH4(+). It catalyses the reaction 2'-deoxyadenosine + H2O + H(+) = 2'-deoxyinosine + NH4(+). In terms of biological role, catalyzes the hydrolytic deamination of adenosine and 2-deoxyadenosine. The chain is Adenosine deaminase from Clostridium kluyveri (strain ATCC 8527 / DSM 555 / NBRC 12016 / NCIMB 10680 / K1).